Reading from the N-terminus, the 175-residue chain is Sec-independent protein translocase protein TatB (175 aa).

A helical membrane pass occupies residues Met-1–Gly-21. Low complexity predominate over residues Ser-94–Gly-115. Disordered regions lie at residues Ser-94 to Ser-118 and Val-153 to Leu-175. The segment covering Val-160–Leu-175 has biased composition (basic residues).

It belongs to the TatB family. In terms of assembly, the Tat system comprises two distinct complexes: a TatABC complex, containing multiple copies of TatA, TatB and TatC subunits, and a separate TatA complex, containing only TatA subunits. Substrates initially bind to the TatABC complex, which probably triggers association of the separate TatA complex to form the active translocon.

It is found in the cell inner membrane. Functionally, part of the twin-arginine translocation (Tat) system that transports large folded proteins containing a characteristic twin-arginine motif in their signal peptide across membranes. Together with TatC, TatB is part of a receptor directly interacting with Tat signal peptides. TatB may form an oligomeric binding site that transiently accommodates folded Tat precursor proteins before their translocation. This is Sec-independent protein translocase protein TatB from Burkholderia pseudomallei (strain 1106a).